The following is a 253-amino-acid chain: Testis-expressed protein 47 (253 aa).

The polypeptide is Testis-expressed protein 47 (Rattus norvegicus (Rat)).